Consider the following 251-residue polypeptide: Flap endonuclease Xni (251 aa).

Asp-104 is a Mg(2+) binding site. The region spanning 160–248 (VSPQQLSDYW…ALTGNLQQLR (89 aa)) is the 5'-3' exonuclease domain. K(+) is bound by residues Leu-171, Ala-172, Pro-180, Val-182, and Ile-185. The interval 184-189 (GIGPKT) is interaction with DNA.

It belongs to the Xni family. The cofactor is Mg(2+). K(+) is required as a cofactor.

Functionally, has flap endonuclease activity. During DNA replication, flap endonucleases cleave the 5'-overhanging flap structure that is generated by displacement synthesis when DNA polymerase encounters the 5'-end of a downstream Okazaki fragment. The polypeptide is Flap endonuclease Xni (Serratia proteamaculans (strain 568)).